The primary structure comprises 206 residues: Large ribosomal subunit protein uL4 (206 aa).

The segment at 46–77 (GTRAQKDREQVRHSTKKPFKQKGTGNARAGMT) is disordered.

The protein belongs to the universal ribosomal protein uL4 family. Part of the 50S ribosomal subunit.

One of the primary rRNA binding proteins, this protein initially binds near the 5'-end of the 23S rRNA. It is important during the early stages of 50S assembly. It makes multiple contacts with different domains of the 23S rRNA in the assembled 50S subunit and ribosome. Its function is as follows. Forms part of the polypeptide exit tunnel. The sequence is that of Large ribosomal subunit protein uL4 from Paracidovorax citrulli (strain AAC00-1) (Acidovorax citrulli).